The chain runs to 212 residues: Glycerol-3-phosphate acyltransferase (212 aa).

5 consecutive transmembrane segments (helical) span residues 5 to 25 (ALGM…ILVC), 53 to 73 (VAAA…VWLA), 80 to 100 (PLYL…PVFF), 112 to 132 (FGAI…TWLL), and 138 to 158 (GYSS…VWWF).

Belongs to the PlsY family. Probably interacts with PlsX.

The protein localises to the cell inner membrane. The catalysed reaction is an acyl phosphate + sn-glycerol 3-phosphate = a 1-acyl-sn-glycero-3-phosphate + phosphate. The protein operates within lipid metabolism; phospholipid metabolism. Catalyzes the transfer of an acyl group from acyl-phosphate (acyl-PO(4)) to glycerol-3-phosphate (G3P) to form lysophosphatidic acid (LPA). This enzyme utilizes acyl-phosphate as fatty acyl donor, but not acyl-CoA or acyl-ACP. The protein is Glycerol-3-phosphate acyltransferase of Serratia proteamaculans (strain 568).